We begin with the raw amino-acid sequence, 144 residues long: TSC22 domain family protein 1 (144 aa).

The segment at 77–98 is leucine-zipper; the sequence is LKEQIKELIEKNSQLEQENNLL. Positions 109–144 are disordered; sequence QFQAQLQTGSPPATTQPQGTTQPPAQPASQGSGPTA. Over residues 115–144 the composition is skewed to low complexity; that stretch reads QTGSPPATTQPQGTTQPPAQPASQGSGPTA.

Belongs to the TSC-22/Dip/Bun family. Forms homodimers. Forms a heterodimer with TSC22D4/THG1. Interacts with histone H1-2. Interacts with GNL3.

The protein localises to the cytoplasm. It is found in the nucleus. In terms of biological role, transcriptional repressor. Plays a role in the repression of hematopoietic precursor cell growth. Promotes IL2 deprivation-induced apoptosis in T-lymphocytes, via repression of TSC22D3/GILZ transcription and activation of the caspase cascade. Positively regulates cell death in response to TGFB3 during mammary gland involution. In Bos taurus (Bovine), this protein is TSC22 domain family protein 1.